The primary structure comprises 440 residues: Glutamate-1-semialdehyde 2,1-aminomutase (440 aa).

Residue lysine 273 is modified to N6-(pyridoxal phosphate)lysine.

It belongs to the class-III pyridoxal-phosphate-dependent aminotransferase family. HemL subfamily. As to quaternary structure, homodimer. Pyridoxal 5'-phosphate serves as cofactor.

The protein resides in the cytoplasm. The catalysed reaction is (S)-4-amino-5-oxopentanoate = 5-aminolevulinate. It functions in the pathway porphyrin-containing compound metabolism; protoporphyrin-IX biosynthesis; 5-aminolevulinate from L-glutamyl-tRNA(Glu): step 2/2. The sequence is that of Glutamate-1-semialdehyde 2,1-aminomutase from Alkaliphilus metalliredigens (strain QYMF).